The sequence spans 107 residues: Pyrimidine/purine nucleoside phosphorylase (107 aa).

This sequence belongs to the nucleoside phosphorylase PpnP family.

It carries out the reaction a purine D-ribonucleoside + phosphate = a purine nucleobase + alpha-D-ribose 1-phosphate. The enzyme catalyses adenosine + phosphate = alpha-D-ribose 1-phosphate + adenine. It catalyses the reaction cytidine + phosphate = cytosine + alpha-D-ribose 1-phosphate. The catalysed reaction is guanosine + phosphate = alpha-D-ribose 1-phosphate + guanine. It carries out the reaction inosine + phosphate = alpha-D-ribose 1-phosphate + hypoxanthine. The enzyme catalyses thymidine + phosphate = 2-deoxy-alpha-D-ribose 1-phosphate + thymine. It catalyses the reaction uridine + phosphate = alpha-D-ribose 1-phosphate + uracil. The catalysed reaction is xanthosine + phosphate = alpha-D-ribose 1-phosphate + xanthine. Its function is as follows. Catalyzes the phosphorolysis of diverse nucleosides, yielding D-ribose 1-phosphate and the respective free bases. Can use uridine, adenosine, guanosine, cytidine, thymidine, inosine and xanthosine as substrates. Also catalyzes the reverse reactions. The polypeptide is Pyrimidine/purine nucleoside phosphorylase (Aromatoleum aromaticum (strain DSM 19018 / LMG 30748 / EbN1) (Azoarcus sp. (strain EbN1))).